Consider the following 601-residue polypeptide: MSRQSTVSFRSGGGRSFSTASAITPSVSRTSFTSVSRSGGGGGGGFGRVSLGGAYGAGGFGSRSLYNLGGSKRISISASGGGFRNRFGAGAGGGYGFGGGAGSGFGFGGGAGGGGFGLGGGAGFGGGFGGPGFPVCPPGGIQEVTVNQSLLTPLNLQIDPTIQRVRTEEREQIKTLNNKFASFIDKVRFLEQQNKVLDTKWALLQEQGTKTVRQNLEPLLEQYINNLRRQLDGIVGERGRLDSELRNMQDLVEDFKNKYEDEINKRTTAENEFVMLKKDVDAAYMNKVELEAKVDALMDEINFMKMFFDAELSQMQTHVSDTSVVLSMDNNRSLDLDSIIAEVKAQYEDIANRSRTEAESWYQTKYEELQQTAGRHGDDLRNTKHEISEMNRMIQRLRSEIDNVKKQCANLQNAIADAEQRGELALKDARSKLAELEDALQKAKQDMARLLREYQELMNTKLALDVEIATYRKLLEGEECRLSGEGVGPVNISVVTNTVSSGYGGGSGFGGGLGGGLGGGLGGGLGGGLGGGLGSGLGGGGSSSFYSSSSGGVGLGGGLSVGGSGFSASSGRSLGFGSGGGSSSSVKFVSTTSSSRKSFKS.

Residues 1 to 168 (MSRQSTVSFR…DPTIQRVRTE (168 aa)) form a head region. 4 positions are modified to phosphoserine: Ser-5, Ser-8, Ser-16, and Ser-21. The residue at position 24 (Thr-24) is a Phosphothreonine; by CDK1. 6 positions are modified to phosphoserine: Ser-26, Ser-36, Ser-50, Ser-64, Ser-71, and Ser-75. Thr-152 is modified (phosphothreonine; by CDK1). Thr-167 bears the Phosphothreonine; by AURKB mark. Residues 169 to 204 (EREQIKTLNNKFASFIDKVRFLEQQNKVLDTKWALL) form a coil 1A region. The IF rod domain occupies 169 to 482 (EREQIKTLNN…KLLEGEECRL (314 aa)). Residues 205 to 223 (QEQGTKTVRQNLEPLLEQY) are linker 1. The tract at residues 224 to 316 (INNLRRQLDG…FFDAELSQMQ (93 aa)) is coil 1B. The segment at 317-339 (THVSDTSVVLSMDNNRSLDLDSI) is linker 12. A coil 2 region spans residues 340–478 (IAEVKAQYED…ATYRKLLEGE (139 aa)). Residues 479–601 (ECRLSGEGVG…TSSSRKSFKS (123 aa)) form a tail region. The segment at 576–601 (FGSGGGSSSSVKFVSTTSSSRKSFKS) is disordered. A compositionally biased stretch (low complexity) spans 583–601 (SSSVKFVSTTSSSRKSFKS).

This sequence belongs to the intermediate filament family. Heterodimer of a type I and a type II keratin. Heterodimer with type I keratin KRT25 leading to the formation of keratin intermediate filament (KIF) network. Forms a heterodimer (via 2B domains) with KRT14 (via 2B domains). Interacts with TCHP. Interacts with EPPK1. Interacts with AMELX. Interacts with PKP1 (via N-terminus) and PKP2. Phosphorylated by CDK1, AURKB and Rho-kinase, phosphorylation is regulated by the cell cycle. Thr-24 phosphorylation, mediated by CDK1, peaks during prometaphase or metaphase cells with phosphorylated filamentous structures evident throughout the cytoplasm early mitosis. CDK1 phosphorylates Thr-24 in mitotic cells at the site of injury. In terms of processing, O-glycosylated.

The protein resides in the cytoplasm. In terms of biological role, required for the formation of keratin intermediate filaments in the basal epidermis and maintenance of the skin barrier in response to mechanical stress. Regulates the recruitment of Langerhans cells to the epidermis, potentially by modulation of the abundance of macrophage chemotactic cytokines, macrophage inflammatory cytokines and CTNND1 localization in keratinocytes. The chain is Keratin, type II cytoskeletal 5 from Bos taurus (Bovine).